A 483-amino-acid chain; its full sequence is Glutamate--tRNA ligase (483 aa).

A 'HIGH' region motif is present at residues 11-21 (PSPTGHLHIGN). The 'KMSKS' region signature appears at 252–256 (KLSKR). K255 provides a ligand contact to ATP.

It belongs to the class-I aminoacyl-tRNA synthetase family. Glutamate--tRNA ligase type 1 subfamily. Monomer.

It is found in the cytoplasm. It carries out the reaction tRNA(Glu) + L-glutamate + ATP = L-glutamyl-tRNA(Glu) + AMP + diphosphate. Functionally, catalyzes the attachment of glutamate to tRNA(Glu) in a two-step reaction: glutamate is first activated by ATP to form Glu-AMP and then transferred to the acceptor end of tRNA(Glu). This Bacillus velezensis (strain DSM 23117 / BGSC 10A6 / LMG 26770 / FZB42) (Bacillus amyloliquefaciens subsp. plantarum) protein is Glutamate--tRNA ligase.